A 322-amino-acid chain; its full sequence is Beta-ketoacyl-[acyl-carrier-protein] synthase III (322 aa).

Active-site residues include Cys113 and His249. The interval 250 to 254 (QANLR) is ACP-binding. Asn279 is a catalytic residue.

Belongs to the thiolase-like superfamily. FabH family. As to quaternary structure, homodimer.

It is found in the cytoplasm. It carries out the reaction malonyl-[ACP] + acetyl-CoA + H(+) = 3-oxobutanoyl-[ACP] + CO2 + CoA. The protein operates within lipid metabolism; fatty acid biosynthesis. Catalyzes the condensation reaction of fatty acid synthesis by the addition to an acyl acceptor of two carbons from malonyl-ACP. Catalyzes the first condensation reaction which initiates fatty acid synthesis and may therefore play a role in governing the total rate of fatty acid production. Possesses both acetoacetyl-ACP synthase and acetyl transacylase activities. Its substrate specificity determines the biosynthesis of branched-chain and/or straight-chain of fatty acids. The protein is Beta-ketoacyl-[acyl-carrier-protein] synthase III of Granulibacter bethesdensis (strain ATCC BAA-1260 / CGDNIH1).